We begin with the raw amino-acid sequence, 306 residues long: Olfactory receptor 8G17 (306 aa).

Residues 1-28 (MEKGNQSTVNKFFLSGLTEQPELQLPLF) are Extracellular-facing. An N-linked (GlcNAc...) asparagine glycan is attached at asparagine 5. The helical transmembrane segment at 29-49 (LLFLGIYLLTVLGNLGMIILI) threads the bilayer. The Cytoplasmic portion of the chain corresponds to 50–56 (LLSSYLH). Residues 57–77 (TPMYFFLSSLSFIDFCQSTVI) traverse the membrane as a helical segment. Topologically, residues 78–97 (TPKMLVKFVREKNEISYPEC) are extracellular. The helical transmembrane segment at 98–118 (ITQLCFFVIFAVSESYMLAAM) threads the bilayer. The Cytoplasmic portion of the chain corresponds to 119-143 (AYDRYVAICSPLLYSSIMSQHKCLS). A helical membrane pass occupies residues 144 to 164 (LVLGVYILGIVCASAHVGCIF). Residues 165–196 (RIDFCKSDLINHYFCDLISILNLSCSNIFVND) are Extracellular-facing. A helical transmembrane segment spans residues 197 to 217 (LVILIFSLINTIFPTLTILSS). The Cytoplasmic portion of the chain corresponds to 218–236 (YAFIIISILRIKSTEGRSK). The helical transmembrane segment at 237 to 257 (AFSTCSSHISAVAIFYISAGF) threads the bilayer. The Extracellular segment spans residues 258–271 (TYLNPSSSHSMDEG). The helical transmembrane segment at 272–292 (KVSSIFYTIIVPMLNPLIYSL) threads the bilayer. The Cytoplasmic portion of the chain corresponds to 293–306 (RNKDVKIALKKMIE).

Belongs to the G-protein coupled receptor 1 family.

It is found in the cell membrane. Odorant receptor. In Mus musculus (Mouse), this protein is Olfactory receptor 8G17.